Here is a 502-residue protein sequence, read N- to C-terminus: Probable glycine dehydrogenase (decarboxylating) subunit 2 (502 aa).

K273 bears the N6-(pyridoxal phosphate)lysine mark.

The protein belongs to the GcvP family. C-terminal subunit subfamily. In terms of assembly, the glycine cleavage system is composed of four proteins: P, T, L and H. In this organism, the P 'protein' is a heterodimer of two subunits. It depends on pyridoxal 5'-phosphate as a cofactor.

It carries out the reaction N(6)-[(R)-lipoyl]-L-lysyl-[glycine-cleavage complex H protein] + glycine + H(+) = N(6)-[(R)-S(8)-aminomethyldihydrolipoyl]-L-lysyl-[glycine-cleavage complex H protein] + CO2. The glycine cleavage system catalyzes the degradation of glycine. The P protein binds the alpha-amino group of glycine through its pyridoxal phosphate cofactor; CO(2) is released and the remaining methylamine moiety is then transferred to the lipoamide cofactor of the H protein. This Thermococcus kodakarensis (strain ATCC BAA-918 / JCM 12380 / KOD1) (Pyrococcus kodakaraensis (strain KOD1)) protein is Probable glycine dehydrogenase (decarboxylating) subunit 2.